A 390-amino-acid chain; its full sequence is Chorismate synthase (390 aa).

Arginine 39 and arginine 45 together coordinate NADP(+). FMN contacts are provided by residues 132–134, 253–254, glycine 298, 313–317, and arginine 339; these read RSS, NA, and KPIPT.

This sequence belongs to the chorismate synthase family. As to quaternary structure, homotetramer. FMNH2 serves as cofactor.

The enzyme catalyses 5-O-(1-carboxyvinyl)-3-phosphoshikimate = chorismate + phosphate. Its pathway is metabolic intermediate biosynthesis; chorismate biosynthesis; chorismate from D-erythrose 4-phosphate and phosphoenolpyruvate: step 7/7. Functionally, catalyzes the anti-1,4-elimination of the C-3 phosphate and the C-6 proR hydrogen from 5-enolpyruvylshikimate-3-phosphate (EPSP) to yield chorismate, which is the branch point compound that serves as the starting substrate for the three terminal pathways of aromatic amino acid biosynthesis. This reaction introduces a second double bond into the aromatic ring system. The polypeptide is Chorismate synthase (Bacillus cytotoxicus (strain DSM 22905 / CIP 110041 / 391-98 / NVH 391-98)).